Consider the following 84-residue polypeptide: uncharacterized protein (84 aa).

A 2Fe-2S ferredoxin-type domain is found at 2 to 84; it reads ARVTLRITGT…RAKGDIEIEM (83 aa). 4 residues coordinate [2Fe-2S] cluster: Cys-37, Cys-42, Cys-45, and Cys-74.

[2Fe-2S] cluster serves as cofactor.

This is an uncharacterized protein from Escherichia coli O6:H1 (strain CFT073 / ATCC 700928 / UPEC).